A 147-amino-acid polypeptide reads, in one-letter code: Hemoglobin subunit gamma-2 (147 aa).

The 145-residue stretch at 3–147 folds into the Globin domain; that stretch reads HFTEEDKATI…VASALSSRYH (145 aa). Thr-13 carries the phosphothreonine modification. Phosphoserine occurs at positions 45, 51, and 53. Position 60 is an N6-acetyllysine (Lys-60). His-64 lines the heme b pocket. The residue at position 83 (Lys-83) is an N6-acetyllysine. His-93 contributes to the heme b binding site. The residue at position 94 (Cys-94) is an S-nitrosocysteine. 3 positions are modified to phosphoserine: Ser-140, Ser-143, and Ser-144.

Belongs to the globin family. In terms of assembly, heterotetramer of two alpha chains and two gamma chains in fetal hemoglobin (Hb F). In terms of tissue distribution, red blood cells.

In terms of biological role, gamma chains make up the fetal hemoglobin F, in combination with alpha chains. The protein is Hemoglobin subunit gamma-2 (HBG2) of Hylobates lar (Lar gibbon).